Reading from the N-terminus, the 290-residue chain is 33 kDa chaperonin (290 aa).

Intrachain disulfides connect cysteine 235/cysteine 237 and cysteine 268/cysteine 271.

Belongs to the HSP33 family. Under oxidizing conditions two disulfide bonds are formed involving the reactive cysteines. Under reducing conditions zinc is bound to the reactive cysteines and the protein is inactive.

It is found in the cytoplasm. In terms of biological role, redox regulated molecular chaperone. Protects both thermally unfolding and oxidatively damaged proteins from irreversible aggregation. Plays an important role in the bacterial defense system toward oxidative stress. This chain is 33 kDa chaperonin, found in Streptococcus gordonii (strain Challis / ATCC 35105 / BCRC 15272 / CH1 / DL1 / V288).